Consider the following 425-residue polypeptide: Diacetylchitobiose binding protein DasA (425 aa).

The first 20 residues, 1-20, serve as a signal peptide directing secretion; the sequence is MKRKLIAAIGIAGMMVSIAA. The N-palmitoyl cysteine moiety is linked to residue Cys-21. Cys-21 is lipidated: S-diacylglycerol cysteine.

It belongs to the bacterial solute-binding protein 1 family. As to quaternary structure, the complex is composed of two ATP-binding proteins (MsiK), two transmembrane proteins (DasB and DasC) and a solute-binding protein (DasA).

It is found in the cell membrane. Part of the ABC transporter complex DasABC-MsiK involved in N,N'-diacetylchitobiose ((GlcNAc)2) uptake. Binds specifically to (GlcNAc)2. Can also bind to GlcNAc, (GlcNAc)3, (GlcNAc)4 and (GlcNAc)5, but it exhibits the highest affinity for (GlcNAc)2. Involved in the control of morphological differentiation. This is Diacetylchitobiose binding protein DasA from Streptomyces coelicolor (strain ATCC BAA-471 / A3(2) / M145).